Reading from the N-terminus, the 967-residue chain is RNA polymerase-associated protein RapA (967 aa).

The region spanning 163 to 337 is the Helicase ATP-binding domain; the sequence is EVGQRTAPRV…FARLSLLDPD (175 aa). Residue 176–183 participates in ATP binding; it reads DEVGLGKT. Positions 283-286 match the DEAH box motif; the sequence is DEAH. One can recognise a Helicase C-terminal domain in the interval 489–660; that stretch reads RLEWLITFLK…KFLQNPTALE (172 aa).

It belongs to the SNF2/RAD54 helicase family. RapA subfamily. In terms of assembly, interacts with the RNAP. Has a higher affinity for the core RNAP than for the holoenzyme. Its ATPase activity is stimulated by binding to RNAP.

Its function is as follows. Transcription regulator that activates transcription by stimulating RNA polymerase (RNAP) recycling in case of stress conditions such as supercoiled DNA or high salt concentrations. Probably acts by releasing the RNAP, when it is trapped or immobilized on tightly supercoiled DNA. Does not activate transcription on linear DNA. Probably not involved in DNA repair. This chain is RNA polymerase-associated protein RapA, found in Pasteurella multocida (strain Pm70).